The sequence spans 284 residues: MEMO1 family protein SSO0066 (284 aa).

This sequence belongs to the MEMO1 family.

The chain is MEMO1 family protein SSO0066 from Saccharolobus solfataricus (strain ATCC 35092 / DSM 1617 / JCM 11322 / P2) (Sulfolobus solfataricus).